The chain runs to 693 residues: Auxin response factor 10 (693 aa).

The segment at residues 115–217 (FAKTLTQSDA…DLCVGIRRAK (103 aa)) is a DNA-binding region (TF-B3). Residues 580–668 (TGHCKVFMES…DIGGDNVRKT (89 aa)) enclose the PB1 domain.

The protein belongs to the ARF family. In terms of assembly, homodimers and heterodimers. Expressed in the whole plant.

The protein resides in the nucleus. Its function is as follows. Auxin response factors (ARFs) are transcriptional factors that bind specifically to the DNA sequence 5'-TGTCTC-3' found in the auxin-responsive promoter elements (AuxREs). Could act as transcriptional activator or repressor. Formation of heterodimers with Aux/IAA proteins may alter their ability to modulate early auxin response genes expression. This chain is Auxin response factor 10 (ARF10), found in Arabidopsis thaliana (Mouse-ear cress).